The following is a 226-amino-acid chain: Transmembrane protein 204 (226 aa).

The Cytoplasmic portion of the chain corresponds to 1 to 5; the sequence is MTVQK. A helical membrane pass occupies residues 6-26; that stretch reads LVATAVLVALVSLILNNAAAF. Topologically, residues 27 to 103 are extracellular; sequence TPNWVYQTLE…LQFDMMRACN (77 aa). A helical membrane pass occupies residues 104–124; the sequence is LVATAALAVGQITFILGLTGL. The Cytoplasmic portion of the chain corresponds to 125-136; it reads PLMSPESQCWEE. Residues 137 to 157 traverse the membrane as a helical segment; it reads AMAAAFQLASFVLVIGLVTFY. The Extracellular portion of the chain corresponds to 158 to 170; it reads RIGPYTNLSWSCY. Asparagine 164 is a glycosylation site (N-linked (GlcNAc...) asparagine). A helical transmembrane segment spans residues 171–191; the sequence is LNIGACLLATLAAAMLIWNIL. Over 192-226 the chain is Cytoplasmic; sequence HRREDCMAPRVIVISRSLTARFRRGLDNDYVESPC.

Its subcellular location is the cell junction. It localises to the adherens junction. The protein localises to the cell membrane. Can influence paracellular permeability. Appears to be involved in cell-cell interactions through adherens. The chain is Transmembrane protein 204 (Tmem204) from Rattus norvegicus (Rat).